Reading from the N-terminus, the 253-residue chain is Sugar fermentation stimulation protein homolog (253 aa).

The protein belongs to the SfsA family.

The sequence is that of Sugar fermentation stimulation protein homolog from Chromohalobacter salexigens (strain ATCC BAA-138 / DSM 3043 / CIP 106854 / NCIMB 13768 / 1H11).